The chain runs to 156 residues: Ribonuclease pancreatic (156 aa).

Positions 1–26 are cleaved as a signal peptide; that stretch reads MGLEKSLVFFPLLVLLALGWVQPCLG. Lys-33 and Arg-36 together coordinate substrate. The active-site Proton acceptor is His-38. Intrachain disulfides connect Cys-54–Cys-112, Cys-68–Cys-123, Cys-86–Cys-138, and Cys-93–Cys-100. 69–73 is a substrate binding site; the sequence is KPVNT. The N-linked (GlcNAc...) asparagine glycan is linked to Asn-90. Substrate contacts are provided by Lys-94 and Arg-113. His-147 acts as the Proton donor in catalysis.

It belongs to the pancreatic ribonuclease family. Monomer. Interacts with and forms tight 1:1 complexes with RNH1. Dimerization of two such complexes may occur. Interaction with RNH1 inhibits this protein. Pancreas.

Its subcellular location is the secreted. The catalysed reaction is an [RNA] containing cytidine + H2O = an [RNA]-3'-cytidine-3'-phosphate + a 5'-hydroxy-ribonucleotide-3'-[RNA].. It catalyses the reaction an [RNA] containing uridine + H2O = an [RNA]-3'-uridine-3'-phosphate + a 5'-hydroxy-ribonucleotide-3'-[RNA].. Functionally, endonuclease that catalyzes the cleavage of RNA on the 3' side of pyrimidine nucleotides. Acts on single-stranded and double-stranded RNA. This Glis glis (Fat dormouse) protein is Ribonuclease pancreatic (RNASE1).